Here is a 476-residue protein sequence, read N- to C-terminus: Vitamin D-binding protein (476 aa).

An N-terminal signal peptide occupies residues 1 to 16 (MKRVLVLLLALAFGHA). Albumin domains are found at residues 17-208 (LERG…QMKQ), 209-394 (LLLL…LMKR), and 395-476 (QLTS…ILQS). Disulfide bonds link Cys29-Cys75, Cys74-Cys83, Cys96-Cys112, Cys111-Cys122, Cys145-Cys190, Cys189-Cys198, Cys220-Cys266, Cys265-Cys273, Cys286-Cys300, Cys299-Cys311, Cys335-Cys376, Cys375-Cys384, Cys407-Cys453, and Cys452-Cys462. N-linked (GlcNAc...) asparagine glycosylation occurs at Asn288. Position 434 is a phosphoserine (Ser434).

Belongs to the ALB/AFP/VDB family. In terms of assembly, associates with membrane-bound immunoglobulin on the surface of B-lymphocytes and with IgG Fc receptor on the membranes of T-lymphocytes. Interacts with LRP2; the interaction is required for renal uptake of GC in complex with 25-hydroxyvitamin D3.

It is found in the secreted. Its function is as follows. Involved in vitamin D transport and storage, scavenging of extracellular G-actin, enhancement of the chemotactic activity of C5 alpha for neutrophils in inflammation and macrophage activation. This chain is Vitamin D-binding protein (Gc), found in Rattus norvegicus (Rat).